We begin with the raw amino-acid sequence, 173 residues long: Ribosome maturation factor RimM (173 aa).

The PRC barrel domain maps to 90-169 (EDEYFWFDIL…RIDTKGAQDI (80 aa)).

Belongs to the RimM family. Binds ribosomal protein uS19.

The protein localises to the cytoplasm. In terms of biological role, an accessory protein needed during the final step in the assembly of 30S ribosomal subunit, possibly for assembly of the head region. Essential for efficient processing of 16S rRNA. May be needed both before and after RbfA during the maturation of 16S rRNA. It has affinity for free ribosomal 30S subunits but not for 70S ribosomes. In Nitratiruptor sp. (strain SB155-2), this protein is Ribosome maturation factor RimM.